A 246-amino-acid polypeptide reads, in one-letter code: Small ribosomal subunit protein uS3A (246 aa).

In terms of domain architecture, KH type-2 spans 21 to 92 (LNEFLTRELA…SVELYAEKVA (72 aa)). Residues 215-246 (DEIVPTTPISEQKAAKPDQPQPPAMPQPVATA) are disordered.

This sequence belongs to the universal ribosomal protein uS3 family.

Its subcellular location is the cytoplasm. It is found in the nucleus. The protein localises to the nucleolus. The protein resides in the mitochondrion inner membrane. It localises to the cytoskeleton. Its subcellular location is the spindle. The enzyme catalyses 2'-deoxyribonucleotide-(2'-deoxyribose 5'-phosphate)-2'-deoxyribonucleotide-DNA = a 3'-end 2'-deoxyribonucleotide-(2,3-dehydro-2,3-deoxyribose 5'-phosphate)-DNA + a 5'-end 5'-phospho-2'-deoxyribonucleoside-DNA + H(+). In terms of biological role, component of the small ribosomal subunit. The ribosome is a large ribonucleoprotein complex responsible for the synthesis of proteins in the cell. Has endonuclease activity and plays a role in repair of damaged DNA. Also involved in other processes including regulation of transcription, translation of its cognate mRNA, spindle formation and chromosome movement during mitosis, and apoptosis. This Xenopus laevis (African clawed frog) protein is Small ribosomal subunit protein uS3A (rps3-a).